The chain runs to 326 residues: tRNA-dihydrouridine(20/20a) synthase (326 aa).

FMN contacts are provided by residues 11–13 (PML) and glutamine 63. Cysteine 93 functions as the Proton donor in the catalytic mechanism. Residues lysine 132, histidine 165, 205-207 (NGG), and 227-228 (GR) contribute to the FMN site.

Belongs to the Dus family. DusA subfamily. FMN is required as a cofactor.

The enzyme catalyses 5,6-dihydrouridine(20) in tRNA + NADP(+) = uridine(20) in tRNA + NADPH + H(+). It catalyses the reaction 5,6-dihydrouridine(20) in tRNA + NAD(+) = uridine(20) in tRNA + NADH + H(+). It carries out the reaction 5,6-dihydrouridine(20a) in tRNA + NADP(+) = uridine(20a) in tRNA + NADPH + H(+). The catalysed reaction is 5,6-dihydrouridine(20a) in tRNA + NAD(+) = uridine(20a) in tRNA + NADH + H(+). Functionally, catalyzes the synthesis of 5,6-dihydrouridine (D), a modified base found in the D-loop of most tRNAs, via the reduction of the C5-C6 double bond in target uridines. Specifically modifies U20 and U20a in tRNAs. This is tRNA-dihydrouridine(20/20a) synthase from Vibrio vulnificus (strain CMCP6).